Reading from the N-terminus, the 340-residue chain is Thermopsin (340 aa).

The first 28 residues, 1–28, serve as a signal peptide directing secretion; the sequence is MNFKSICLIILLSALIIPYIPQNIYFFP. A propeptide spanning residues 29-41 is cleaved from the precursor; the sequence is HRNTTGATISSGL. 10 N-linked (GlcNAc...) asparagine glycosylation sites follow: Asn31, Asn65, Asn85, Asn117, Asn148, Asn197, Asn277, Asn287, Asn327, and Asn334.

Belongs to the peptidase A5 family.

The protein resides in the secreted. The enzyme catalyses Specificity similar to pepsin A, prefers bulky hydrophobic side-chains on either side of the scissible bond.. Functionally, may represent a new class of acid proteases. It digests proteins and peptides in acidic solution. In Sulfolobus acidocaldarius (strain ATCC 33909 / DSM 639 / JCM 8929 / NBRC 15157 / NCIMB 11770), this protein is Thermopsin (thpS).